We begin with the raw amino-acid sequence, 297 residues long: Acetyl-coenzyme A carboxylase carboxyl transferase subunit beta (297 aa).

One can recognise a CoA carboxyltransferase N-terminal domain in the interval 27 to 296; the sequence is LWHKCPSCEA…PVETSQVTAK (270 aa). 4 residues coordinate Zn(2+): cysteine 31, cysteine 34, cysteine 50, and cysteine 53. The segment at 31–53 adopts a C4-type zinc-finger fold; it reads CPSCEAVLYRPELEKTLDVCPKC.

Belongs to the AccD/PCCB family. Acetyl-CoA carboxylase is a heterohexamer composed of biotin carboxyl carrier protein (AccB), biotin carboxylase (AccC) and two subunits each of ACCase subunit alpha (AccA) and ACCase subunit beta (AccD). The cofactor is Zn(2+).

The protein resides in the cytoplasm. The enzyme catalyses N(6)-carboxybiotinyl-L-lysyl-[protein] + acetyl-CoA = N(6)-biotinyl-L-lysyl-[protein] + malonyl-CoA. The protein operates within lipid metabolism; malonyl-CoA biosynthesis; malonyl-CoA from acetyl-CoA: step 1/1. In terms of biological role, component of the acetyl coenzyme A carboxylase (ACC) complex. Biotin carboxylase (BC) catalyzes the carboxylation of biotin on its carrier protein (BCCP) and then the CO(2) group is transferred by the transcarboxylase to acetyl-CoA to form malonyl-CoA. In Stutzerimonas stutzeri (strain A1501) (Pseudomonas stutzeri), this protein is Acetyl-coenzyme A carboxylase carboxyl transferase subunit beta.